The primary structure comprises 314 residues: Calcium homeostasis modulator protein 4 (314 aa).

At 1 to 14 (MCPTLNNIVSSLQR) the chain is on the cytoplasmic side. Residues 15–37 (NGIFINSLIAALTIGGQQLFSSS) form a helical membrane-spanning segment. Topologically, residues 38 to 48 (TFSCPCQVGKN) are extracellular. 2 disulfide bridges follow: C41-C131 and C43-C162. Residues 49–71 (FYYGSAFLVIPALILLVAGFALR) traverse the membrane as a helical segment. Over 72-103 (SQMWTITGEYCCSCAPPYRRISPLECKLACLR) the chain is Cytoplasmic. Residues 104–129 (FFSITGRAVIAPLTWLAVTLLTGTYY) form a helical membrane-spanning segment. Residues 130–183 (ECAASEFASVDHYPMFDNVSASKREEILAGFPCCRSAPSDVILVRDEIALLHRY) are Extracellular-facing. The chain crosses the membrane as a helical span at residues 184 to 207 (QSQMLGWILITLATIAALVSCCVA). At 208–314 (KCCSPLTSLQ…DRSRGIELKP (107 aa)) the chain is on the cytoplasmic side.

This sequence belongs to the CALHM family. In terms of assembly, oligomerizes to form decameric and undecameric channels. Two hemichannels can assemble in a tail-to-tail manner to form a gap junction. Placenta.

It localises to the cell membrane. In terms of biological role, may assemble to form gap junction channel-like structures involved in intercellular communication. Channel gating and ion conductance are likely regulated by membrane lipids rather than by membrane depolarization or extracellular calcium levels. In Homo sapiens (Human), this protein is Calcium homeostasis modulator protein 4.